The chain runs to 525 residues: Squalene epoxidase 3 (525 aa).

Residues 9–29 (HCILTTTFVASLFAFLLLYVL) traverse the membrane as a helical segment. Residues 64-65 (VA), 84-85 (ER), arginine 92, arginine 163, valine 179, aspartate 341, and methionine 354 each bind FAD. A run of 2 helical transmembrane segments spans residues 452 to 472 (LVLH…VPLP) and 477 to 497 (LWLG…IIKA).

This sequence belongs to the squalene monooxygenase family. Requires FAD as cofactor. Expressed in seedlings, leaves, stems, inflorescences and siliques.

Its subcellular location is the membrane. The catalysed reaction is squalene + reduced [NADPH--hemoprotein reductase] + O2 = (S)-2,3-epoxysqualene + oxidized [NADPH--hemoprotein reductase] + H2O + H(+). The protein operates within terpene metabolism; lanosterol biosynthesis; lanosterol from farnesyl diphosphate: step 2/3. In terms of biological role, catalyzes the stereospecific oxidation of squalene to (S)-2,3-epoxysqualene, and is considered to be a rate-limiting enzyme in steroid biosynthesis. Can produce not only oxidosqualene, but also 2,3:22,23-dioxidosqualene. This Arabidopsis thaliana (Mouse-ear cress) protein is Squalene epoxidase 3 (SQE3).